The sequence spans 201 residues: UPF0301 protein Rleg2_0617 (201 aa).

The protein belongs to the UPF0301 (AlgH) family.

This Rhizobium leguminosarum bv. trifolii (strain WSM2304) protein is UPF0301 protein Rleg2_0617.